Here is a 143-residue protein sequence, read N- to C-terminus: Large ribosomal subunit protein uL15 (143 aa).

The tract at residues 1 to 59 (MELNTITPGQGAKHAKRRVGRGIGSGLGKTAGRGHKGQKSRSGGYHKVGFEGGQMPMQR) is disordered. Over residues 21-31 (RGIGSGLGKTA) the composition is skewed to gly residues.

It belongs to the universal ribosomal protein uL15 family. As to quaternary structure, part of the 50S ribosomal subunit.

Functionally, binds to the 23S rRNA. The sequence is that of Large ribosomal subunit protein uL15 from Polaromonas naphthalenivorans (strain CJ2).